A 275-amino-acid chain; its full sequence is 3-methyl-2-oxobutanoate hydroxymethyltransferase (275 aa).

Mg(2+) is bound by residues D49 and D88. Residues 49–50 (DS), D88, and K118 each bind 3-methyl-2-oxobutanoate. E120 lines the Mg(2+) pocket. E187 functions as the Proton acceptor in the catalytic mechanism.

It belongs to the PanB family. As to quaternary structure, homodecamer; pentamer of dimers. Mg(2+) serves as cofactor.

The protein localises to the cytoplasm. The enzyme catalyses 3-methyl-2-oxobutanoate + (6R)-5,10-methylene-5,6,7,8-tetrahydrofolate + H2O = 2-dehydropantoate + (6S)-5,6,7,8-tetrahydrofolate. It functions in the pathway cofactor biosynthesis; (R)-pantothenate biosynthesis; (R)-pantoate from 3-methyl-2-oxobutanoate: step 1/2. Catalyzes the reversible reaction in which hydroxymethyl group from 5,10-methylenetetrahydrofolate is transferred onto alpha-ketoisovalerate to form ketopantoate. The sequence is that of 3-methyl-2-oxobutanoate hydroxymethyltransferase from Brucella melitensis biotype 1 (strain ATCC 23456 / CCUG 17765 / NCTC 10094 / 16M).